Reading from the N-terminus, the 424-residue chain is Adenylosuccinate synthetase (424 aa).

GTP is bound by residues 12–18 (GDEGKGK) and 40–42 (GHT). The active-site Proton acceptor is the aspartate 13. Mg(2+)-binding residues include aspartate 13 and glycine 40. IMP is bound by residues 13-16 (DEGK), 38-41 (NAGH), threonine 130, arginine 144, asparagine 220, threonine 235, and arginine 299. The Proton donor role is filled by histidine 41. Residue 295–301 (VTTGRKR) participates in substrate binding. GTP contacts are provided by residues arginine 301, 327–329 (KLD), and 412–414 (GTG).

The protein belongs to the adenylosuccinate synthetase family. As to quaternary structure, homodimer. Mg(2+) serves as cofactor.

Its subcellular location is the cytoplasm. It carries out the reaction IMP + L-aspartate + GTP = N(6)-(1,2-dicarboxyethyl)-AMP + GDP + phosphate + 2 H(+). It participates in purine metabolism; AMP biosynthesis via de novo pathway; AMP from IMP: step 1/2. Its function is as follows. Plays an important role in the de novo pathway and in the salvage pathway of purine nucleotide biosynthesis. Catalyzes the first committed step in the biosynthesis of AMP from IMP. In Emericella nidulans (strain FGSC A4 / ATCC 38163 / CBS 112.46 / NRRL 194 / M139) (Aspergillus nidulans), this protein is Adenylosuccinate synthetase (adB).